Consider the following 587-residue polypeptide: Aspartate--tRNA ligase (587 aa).

Glutamate 174 is a binding site for L-aspartate. The segment at 198-201 (QTFK) is aspartate. Arginine 220 is a binding site for L-aspartate. Residues 220 to 222 (RDE) and glutamine 229 each bind ATP. Histidine 447 is an L-aspartate binding site. Residue glutamate 481 coordinates ATP. Residue arginine 488 coordinates L-aspartate. ATP is bound at residue 533-536 (GLDR).

This sequence belongs to the class-II aminoacyl-tRNA synthetase family. Type 1 subfamily. Homodimer.

Its subcellular location is the cytoplasm. It carries out the reaction tRNA(Asp) + L-aspartate + ATP = L-aspartyl-tRNA(Asp) + AMP + diphosphate. Its function is as follows. Catalyzes the attachment of L-aspartate to tRNA(Asp) in a two-step reaction: L-aspartate is first activated by ATP to form Asp-AMP and then transferred to the acceptor end of tRNA(Asp). This is Aspartate--tRNA ligase from Porphyromonas gingivalis (strain ATCC BAA-308 / W83).